The chain runs to 350 residues: Serine-threonine kinase receptor-associated protein (350 aa).

WD repeat units lie at residues 12–56 (GHTR…GTFL), 57–96 (GHKG…ELMT), 98–137 (AHKH…AEPK), 141–179 (GHTS…EVKS), 180–212 (LNFN…HSAV), 221–262 (EAPA…ESYK), and 263–302 (GHFG…TYGL). Phosphoserine occurs at positions 312, 335, and 338.

The protein belongs to the WD repeat STRAP family. As to quaternary structure, part of the core SMN complex that contains SMN1, GEMIN2/SIP1, DDX20/GEMIN3, GEMIN4, GEMIN5, GEMIN6, GEMIN7, GEMIN8 and STRAP/UNRIP. Part of the SMN-Sm complex that contains SMN1, GEMIN2/SIP1, DDX20/GEMIN3, GEMIN4, GEMIN5, GEMIN6, GEMIN7, GEMIN8, STRAP/UNRIP and the Sm proteins SNRPB, SNRPD1, SNRPD2, SNRPD3, SNRPE, SNRPF and SNRPG. Associates with the SMN complex in the cytoplasm but not in the nucleus. Interacts with GEMIN6; the interaction is direct. Interacts with GEMIN7; the interaction is direct. Interacts with CSDE1/UNR and MAWBP. Interacts with PDPK1. Interacts with TRIM48.

The protein localises to the cytoplasm. It is found in the nucleus. Functionally, the SMN complex catalyzes the assembly of small nuclear ribonucleoproteins (snRNPs), the building blocks of the spliceosome, and thereby plays an important role in the splicing of cellular pre-mRNAs. Most spliceosomal snRNPs contain a common set of Sm proteins SNRPB, SNRPD1, SNRPD2, SNRPD3, SNRPE, SNRPF and SNRPG that assemble in a heptameric protein ring on the Sm site of the small nuclear RNA to form the core snRNP (Sm core). In the cytosol, the Sm proteins SNRPD1, SNRPD2, SNRPE, SNRPF and SNRPG are trapped in an inactive 6S pICln-Sm complex by the chaperone CLNS1A that controls the assembly of the core snRNP. To assemble core snRNPs, the SMN complex accepts the trapped 5Sm proteins from CLNS1A forming an intermediate. Binding of snRNA inside 5Sm triggers eviction of the SMN complex, thereby allowing binding of SNRPD3 and SNRPB to complete assembly of the core snRNP. STRAP plays a role in the cellular distribution of the SMN complex. Negatively regulates TGF-beta signaling but positively regulates the PDPK1 kinase activity by enhancing its autophosphorylation and by significantly reducing the association of PDPK1 with 14-3-3 protein. The chain is Serine-threonine kinase receptor-associated protein (STRAP) from Homo sapiens (Human).